The chain runs to 444 residues: Trigger factor (444 aa).

The PPIase FKBP-type domain occupies 166-251 (GDQVVIDFKG…VKAVKAPKAA (86 aa)).

This sequence belongs to the FKBP-type PPIase family. Tig subfamily.

The protein localises to the cytoplasm. The catalysed reaction is [protein]-peptidylproline (omega=180) = [protein]-peptidylproline (omega=0). Functionally, involved in protein export. Acts as a chaperone by maintaining the newly synthesized protein in an open conformation. Functions as a peptidyl-prolyl cis-trans isomerase. The polypeptide is Trigger factor (Cereibacter sphaeroides (strain KD131 / KCTC 12085) (Rhodobacter sphaeroides)).